Consider the following 196-residue polypeptide: Holliday junction branch migration complex subunit RuvA (196 aa).

Residues 1–64 (MIDRLRGQLV…EDAMLLFGFA (64 aa)) form a domain I region. Positions 65–143 (TREEREAFDA…AAAGGGGGVA (79 aa)) are domain II. Positions 144-153 (AGEGDGPFME) are flexible linker. Residues 153–196 (EAREALTGLGYSLEEAERALRDVPPQETVEQYIKAALRKIGGRR) are domain III.

The protein belongs to the RuvA family. As to quaternary structure, homotetramer. Forms an RuvA(8)-RuvB(12)-Holliday junction (HJ) complex. HJ DNA is sandwiched between 2 RuvA tetramers; dsDNA enters through RuvA and exits via RuvB. An RuvB hexamer assembles on each DNA strand where it exits the tetramer. Each RuvB hexamer is contacted by two RuvA subunits (via domain III) on 2 adjacent RuvB subunits; this complex drives branch migration. In the full resolvosome a probable DNA-RuvA(4)-RuvB(12)-RuvC(2) complex forms which resolves the HJ.

It is found in the cytoplasm. Functionally, the RuvA-RuvB-RuvC complex processes Holliday junction (HJ) DNA during genetic recombination and DNA repair, while the RuvA-RuvB complex plays an important role in the rescue of blocked DNA replication forks via replication fork reversal (RFR). RuvA specifically binds to HJ cruciform DNA, conferring on it an open structure. The RuvB hexamer acts as an ATP-dependent pump, pulling dsDNA into and through the RuvAB complex. HJ branch migration allows RuvC to scan DNA until it finds its consensus sequence, where it cleaves and resolves the cruciform DNA. This is Holliday junction branch migration complex subunit RuvA from Rubrobacter xylanophilus (strain DSM 9941 / JCM 11954 / NBRC 16129 / PRD-1).